Consider the following 228-residue polypeptide: 3-dehydroquinate dehydratase (228 aa).

3-dehydroquinate contacts are provided by residues 30-32 (EWR) and arginine 62. The Proton donor/acceptor role is filled by histidine 118. Lysine 143 functions as the Schiff-base intermediate with substrate in the catalytic mechanism. 3-dehydroquinate contacts are provided by arginine 186, serine 205, and glutamine 209.

Belongs to the type-I 3-dehydroquinase family. Homodimer.

It carries out the reaction 3-dehydroquinate = 3-dehydroshikimate + H2O. It functions in the pathway metabolic intermediate biosynthesis; chorismate biosynthesis; chorismate from D-erythrose 4-phosphate and phosphoenolpyruvate: step 3/7. Involved in the third step of the chorismate pathway, which leads to the biosynthesis of aromatic amino acids. Catalyzes the cis-dehydration of 3-dehydroquinate (DHQ) and introduces the first double bond of the aromatic ring to yield 3-dehydroshikimate. The polypeptide is 3-dehydroquinate dehydratase (Streptococcus pyogenes serotype M12 (strain MGAS9429)).